Reading from the N-terminus, the 293-residue chain is ATP synthase gamma chain (293 aa).

Belongs to the ATPase gamma chain family. As to quaternary structure, F-type ATPases have 2 components, CF(1) - the catalytic core - and CF(0) - the membrane proton channel. CF(1) has five subunits: alpha(3), beta(3), gamma(1), delta(1), epsilon(1). CF(0) has three main subunits: a, b and c.

The protein resides in the cell inner membrane. Functionally, produces ATP from ADP in the presence of a proton gradient across the membrane. The gamma chain is believed to be important in regulating ATPase activity and the flow of protons through the CF(0) complex. In Nitrosospira multiformis (strain ATCC 25196 / NCIMB 11849 / C 71), this protein is ATP synthase gamma chain.